Consider the following 60-residue polypeptide: Small, acid-soluble spore protein C2 (60 aa).

Belongs to the alpha/beta-type SASP family. Post-translationally, SASP are degraded in the first minutes of spore germination and provide amino acids for both new protein synthesis and metabolism.

SASP are bound to spore DNA. They are double-stranded DNA-binding proteins that cause DNA to change to an a-like conformation. They protect the DNA backbone from chemical and enzymatic cleavage and are thus involved in dormant spore's high resistance to UV light. The sequence is that of Small, acid-soluble spore protein C2 (sspC2) from Clostridium perfringens (strain 13 / Type A).